A 417-amino-acid polypeptide reads, in one-letter code: Imidazolonepropionase (417 aa).

Positions 77 and 79 each coordinate Fe(3+). Zn(2+)-binding residues include histidine 77 and histidine 79. Residues arginine 86, tyrosine 149, and histidine 182 each contribute to the 4-imidazolone-5-propanoate site. An N-formimidoyl-L-glutamate-binding site is contributed by tyrosine 149. Residue histidine 247 coordinates Fe(3+). Histidine 247 is a binding site for Zn(2+). 4-imidazolone-5-propanoate is bound at residue glutamine 250. Aspartate 322 is a binding site for Fe(3+). Aspartate 322 contributes to the Zn(2+) binding site. N-formimidoyl-L-glutamate-binding residues include asparagine 324 and glycine 326. Threonine 327 lines the 4-imidazolone-5-propanoate pocket.

Belongs to the metallo-dependent hydrolases superfamily. HutI family. Zn(2+) is required as a cofactor. Requires Fe(3+) as cofactor.

The protein resides in the cytoplasm. The enzyme catalyses 4-imidazolone-5-propanoate + H2O = N-formimidoyl-L-glutamate. The protein operates within amino-acid degradation; L-histidine degradation into L-glutamate; N-formimidoyl-L-glutamate from L-histidine: step 3/3. Functionally, catalyzes the hydrolytic cleavage of the carbon-nitrogen bond in imidazolone-5-propanoate to yield N-formimidoyl-L-glutamate. It is the third step in the universal histidine degradation pathway. The protein is Imidazolonepropionase of Cupriavidus taiwanensis (strain DSM 17343 / BCRC 17206 / CCUG 44338 / CIP 107171 / LMG 19424 / R1) (Ralstonia taiwanensis (strain LMG 19424)).